We begin with the raw amino-acid sequence, 317 residues long: Ribosomal RNA small subunit methyltransferase H (317 aa).

S-adenosyl-L-methionine is bound by residues 34-36 (GGH), D53, F80, D98, and Q105.

Belongs to the methyltransferase superfamily. RsmH family.

The protein resides in the cytoplasm. The catalysed reaction is cytidine(1402) in 16S rRNA + S-adenosyl-L-methionine = N(4)-methylcytidine(1402) in 16S rRNA + S-adenosyl-L-homocysteine + H(+). Its function is as follows. Specifically methylates the N4 position of cytidine in position 1402 (C1402) of 16S rRNA. The sequence is that of Ribosomal RNA small subunit methyltransferase H from Tropheryma whipplei (strain TW08/27) (Whipple's bacillus).